We begin with the raw amino-acid sequence, 392 residues long: Succinate--CoA ligase [ADP-forming] subunit beta (392 aa).

The ATP-grasp domain maps to 9–248 (KGILKQFGVA…ITEEDPLEYE (240 aa)). Residues K50, 57-59 (GRG), E103, M106, and E111 each bind ATP. Mg(2+) is bound by residues N203 and D217. Substrate contacts are provided by residues N268 and 325-327 (GIV).

Belongs to the succinate/malate CoA ligase beta subunit family. As to quaternary structure, heterotetramer of two alpha and two beta subunits. Mg(2+) is required as a cofactor.

The catalysed reaction is succinate + ATP + CoA = succinyl-CoA + ADP + phosphate. It carries out the reaction GTP + succinate + CoA = succinyl-CoA + GDP + phosphate. The protein operates within carbohydrate metabolism; tricarboxylic acid cycle; succinate from succinyl-CoA (ligase route): step 1/1. Functionally, succinyl-CoA synthetase functions in the citric acid cycle (TCA), coupling the hydrolysis of succinyl-CoA to the synthesis of either ATP or GTP and thus represents the only step of substrate-level phosphorylation in the TCA. The beta subunit provides nucleotide specificity of the enzyme and binds the substrate succinate, while the binding sites for coenzyme A and phosphate are found in the alpha subunit. The polypeptide is Succinate--CoA ligase [ADP-forming] subunit beta (Chlorobaculum tepidum (strain ATCC 49652 / DSM 12025 / NBRC 103806 / TLS) (Chlorobium tepidum)).